The following is a 487-amino-acid chain: Serine/threonine-protein phosphatase 2A activator 1 (487 aa).

Disordered regions lie at residues 1 to 28 (MPMI…SSST) and 426 to 487 (GGIQ…PKPE).

Belongs to the PTPA-type PPIase family.

The protein resides in the cytoplasm. It localises to the nucleus. The catalysed reaction is [protein]-peptidylproline (omega=180) = [protein]-peptidylproline (omega=0). In terms of biological role, PPIases accelerate the folding of proteins. It catalyzes the cis-trans isomerization of proline imidic peptide bonds in oligopeptides. Acts as a regulatory subunit for PP2A-like phosphatases modulating their activity or substrate specificity, probably by inducing a conformational change in the catalytic subunit, a direct target of the PPIase. Can reactivate inactive phosphatase PP2A-phosphatase methylesterase complexes (PP2Ai) in presence of ATP and Mg(2+) by dissociating the inactive form from the complex. The sequence is that of Serine/threonine-protein phosphatase 2A activator 1 (RRD1) from Mycosarcoma maydis (Corn smut fungus).